Consider the following 386-residue polypeptide: MEELDALLEELERSTLQDSDEYSNPAPLPLDQHSRKETNLDETSEILSIQDNTSPLPAQLVYTTNIQELNVYSEAQEPKESPPPSKTSAAAQLDELMAHLTEMQAKVAVRADAGKKHLPDKQDHKASLDSMLGGLEQELQDLGIATVPKGHCASCQKPIAGKVIHALGQSWHPEHFVCTHCKEEIGSSPFFERSGLAYCPNDYHQLFSPRCAYCAAPILDKVLTAMNQTWHPEHFFCSHCGEVFGAEGFHEKDKKPYCRKDFLAMFSPKCGGCNRPVLENYLSAMDTVWHPECFVCGDCFTSFSTGSFFELDGRPFCELHYHHRRGTLCHGCGQPITGRCISAMGYKFHPEHFVCAFCLTQLSKGIFREQNDKTYCQPCFNKLFPL.

N-acetylmethionine is present on M1. Positions 3–15 (ELDALLEELERST) match the LD motif 1 motif. The disordered stretch occupies residues 13 to 41 (RSTLQDSDEYSNPAPLPLDQHSRKETNLD). S19 carries the phosphoserine modification. Y22 is modified (phosphotyrosine). Residue S54 is modified to Phosphoserine. Y62 bears the Phosphotyrosine mark. 2 short sequence motifs (LD motif) span residues 70–82 (NVYS…KESP) and 92–103 (QLDELMAHLTEM). At Y72 the chain carries Phosphotyrosine; by LYN. A Phosphoserine modification is found at S81. 4 LIM zinc-binding domains span residues 150–208 (GHCA…QLFS), 209–267 (PRCA…AMFS), 268–326 (PKCG…HRRG), and 327–386 (TLCH…LFPL).

This sequence belongs to the paxillin family. As to quaternary structure, interacts with PTPN22. Interacts with unphosphorylated ITGA4. Interacts with PTK2B/PYK2, PTPN12, AR and SRF. Interacts (via LD motif 3) with LYN and the interaction is induced upon B-cell antigen receptor (BCR) activation. Interacts (via LD motif 3) with PTK2/FAK. Phosphorylated on tyrosine residues. Phosphorylation on Tyr-72 is important for its inhibitory function. Bombesin stimulates phosphorylation on Tyr-22, Tyr-62 and Tyr-72. Macrophages, monocytes and osteoclasts (at protein level). Strongly expressed in cells and tissues of hematopoietic origin. Highest expression in lymphoid tissues such as spleen, lymph node, thymus and appendix and in the vascular smooth muscle. Lower levels in bone marrow and fetal liver. Also expressed in peripheral blood lymphocytes and a number of hematopoietic cell lines. Very low levels found in epithelial cell lines. Expressed in prostate cancer (PCa) cells and its expression intensity is directly linked to PCa progression.

The protein localises to the cytoplasm. The protein resides in the cell junction. It localises to the focal adhesion. Its subcellular location is the nucleus. It is found in the perinuclear region. The protein localises to the cell projection. The protein resides in the podosome. It localises to the cell membrane. In terms of biological role, transcriptional coactivator for androgen receptor (AR) and serum response factor (SRF). Contributes to the regulation of cell adhesion, spreading and cell migration and acts as a negative regulator in integrin-mediated cell adhesion events. Suppresses the integrin-induced tyrosine phosphorylation of paxillin (PXN). May play a critical role as an adapter protein in the formation of the adhesion zone in osteoclasts. Negatively regulates B-cell antigen receptor (BCR) signaling. This chain is Leupaxin (LPXN), found in Homo sapiens (Human).